The primary structure comprises 619 residues: UPF0329 protein ECU08_2070 (619 aa).

Basic and acidic residues-rich tracts occupy residues 350–359 and 369–385; these read EREKREESKG and GAGE…RKEE. Residues 350–425 form a disordered region; that stretch reads EREKREESKG…REKKMGEEHH (76 aa). Residues 386 to 396 show a composition bias toward acidic residues; that stretch reads EGVEVEEEESA.

Belongs to the UPF0329 family.

The polypeptide is UPF0329 protein ECU08_2070 (Encephalitozoon cuniculi (strain GB-M1) (Microsporidian parasite)).